The sequence spans 223 residues: Protein Mis18-alpha (223 aa).

Residues 1 to 30 form a disordered region; the sequence is MAGTFSLEPCSTSSSCNHQGKRSESSLLEK. Positions 9–18 are enriched in polar residues; that stretch reads PCSTSSSCNH. Positions 21–30 are enriched in basic and acidic residues; sequence KRSESSLLEK. Phosphoserine is present on residues Ser-33, Ser-36, and Ser-37. The 99-residue stretch at 71 to 169 folds into the Mis18 domain; sequence PLVFLCTRCR…SVEAVESYTL (99 aa). Positions 76, 79, 132, and 135 each coordinate Zn(2+). A Glycyl lysine isopeptide (Lys-Gly) (interchain with G-Cter in SUMO2) cross-link involves residue Lys-153. Ser-223 is modified (phosphoserine).

It belongs to the mis18 family. Homodimer, and heterodimer with OIP5/MIS18B. Identified in a complex containing MIS18A, OIP5/MIS18B, MIS18BP1, RBBP7 and RBBP4.

It localises to the nucleus. It is found in the chromosome. The protein localises to the centromere. Its function is as follows. Required for recruitment of CENPA to centromeres and normal chromosome segregation during mitosis. The sequence is that of Protein Mis18-alpha (Mis18a) from Rattus norvegicus (Rat).